We begin with the raw amino-acid sequence, 305 residues long: Phosphoribosylaminoimidazole-succinocarboxamide synthase (305 aa).

This sequence belongs to the SAICAR synthetase family.

The catalysed reaction is 5-amino-1-(5-phospho-D-ribosyl)imidazole-4-carboxylate + L-aspartate + ATP = (2S)-2-[5-amino-1-(5-phospho-beta-D-ribosyl)imidazole-4-carboxamido]succinate + ADP + phosphate + 2 H(+). It functions in the pathway purine metabolism; IMP biosynthesis via de novo pathway; 5-amino-1-(5-phospho-D-ribosyl)imidazole-4-carboxamide from 5-amino-1-(5-phospho-D-ribosyl)imidazole-4-carboxylate: step 1/2. This chain is Phosphoribosylaminoimidazole-succinocarboxamide synthase, found in Tropheryma whipplei (strain Twist) (Whipple's bacillus).